The sequence spans 464 residues: Protein FAM90A10 (464 aa).

Disordered regions lie at residues 1–42 (MMAR…DPRL), 69–373 (VPAT…LPTA), and 415–437 (HSPE…SEAP). Basic and acidic residues-rich tracts occupy residues 74-89 (GKKE…KPRG) and 97-114 (NKDK…DPQR). Positions 180–197 (LASLSPLRKASLSSSSSL) are enriched in low complexity.

Belongs to the FAM90 family.

The polypeptide is Protein FAM90A10 (FAM90A10) (Homo sapiens (Human)).